The chain runs to 458 residues: ATP synthase subunit beta (458 aa).

148–155 provides a ligand contact to ATP; that stretch reads GGAGVGKT.

Belongs to the ATPase alpha/beta chains family. In terms of assembly, F-type ATPases have 2 components, CF(1) - the catalytic core - and CF(0) - the membrane proton channel. CF(1) has five subunits: alpha(3), beta(3), gamma(1), delta(1), epsilon(1). CF(0) has three main subunits: a(1), b(2) and c(9-12). The alpha and beta chains form an alternating ring which encloses part of the gamma chain. CF(1) is attached to CF(0) by a central stalk formed by the gamma and epsilon chains, while a peripheral stalk is formed by the delta and b chains.

The protein resides in the cell inner membrane. It catalyses the reaction ATP + H2O + 4 H(+)(in) = ADP + phosphate + 5 H(+)(out). Produces ATP from ADP in the presence of a proton gradient across the membrane. The catalytic sites are hosted primarily by the beta subunits. The sequence is that of ATP synthase subunit beta from Pseudomonas fluorescens (strain SBW25).